The sequence spans 347 residues: MDSFFSTYVWPAIIMIGQSLLLLVCLLVFIAYVLLADRKIWAAVQLRRGPNVVGPFGLFQSFADLLKFVFKEPIIPAGANKAVFLLAPLVTVLLALSTWAVVPLADGWVIANINVGILYIFAISSLEVYGIIMGGWASNSKYPFLGALRSAAQMVSYEVSIGFVIVTVLLCVGSLNLTDIVNAQHTGLGTMLGLPASFLDWHWLSLFPMFIIFFISALAETNRPPFDLPEAESELVAGFMVEYGSSPYMMFMLGEYAAVCLMCALTTILFLGGWLPPVDIWILNWVPGIIWFTLKACFVFFMFAMVKAFVPRYRYDQLMRLGWKVFLPLSLAMVVIVAFVLKLMGWA.

Helical transmembrane passes span Ile-13–Val-33, Pro-50–Phe-70, Ala-82–Val-102, Val-115–Gly-135, Ile-161–Val-181, Phe-198–Leu-218, Cys-263–Leu-283, Val-286–Val-306, and Leu-321–Leu-341.

Belongs to the complex I subunit 1 family. NDH-1 is composed of 14 different subunits. Subunits NuoA, H, J, K, L, M, N constitute the membrane sector of the complex.

The protein localises to the cell inner membrane. It catalyses the reaction a quinone + NADH + 5 H(+)(in) = a quinol + NAD(+) + 4 H(+)(out). Its function is as follows. NDH-1 shuttles electrons from NADH, via FMN and iron-sulfur (Fe-S) centers, to quinones in the respiratory chain. The immediate electron acceptor for the enzyme in this species is believed to be ubiquinone. Couples the redox reaction to proton translocation (for every two electrons transferred, four hydrogen ions are translocated across the cytoplasmic membrane), and thus conserves the redox energy in a proton gradient. This subunit may bind ubiquinone. This is NADH-quinone oxidoreductase subunit H from Rhizobium johnstonii (strain DSM 114642 / LMG 32736 / 3841) (Rhizobium leguminosarum bv. viciae).